A 125-amino-acid chain; its full sequence is Large ribosomal subunit protein uL30 (125 aa).

Residues 1 to 61 form a large ribosomal subunit protein uL30 region; that stretch reads MSKLKVKLLR…HLVGVAYRID (61 aa). The unknown stretch occupies residues 62–125; the sequence is FSGDIPTVER…KNWKGEEVEL (64 aa).

The protein belongs to the universal ribosomal protein uL30 family. In terms of assembly, part of the 50S ribosomal subunit.

The protein is Large ribosomal subunit protein uL30 of Aquifex aeolicus (strain VF5).